The sequence spans 660 residues: F-box/LRR-repeat protein 5 (660 aa).

The interval 1 to 157 (MAPFPDEVDL…IKKKVIAQHC (157 aa)) is hemerythrin-like. 7 residues coordinate Fe(3+): H15, H57, E58, E61, H80, H124, and E127. Residues 200–246 (SASICNLPPEVMLNIFSYLNPQDLCRCSQVNTKWAQLARTGSLWRHL) enclose the F-box domain. The segment at 283–305 (YQEWDEDADIDESEETGEDDPSI) is disordered. Residues 285–303 (EWDEDADIDESEETGEDDP) are compositionally biased toward acidic residues. LRR repeat units follow at residues 311-337 (EKELLNSLVHYILPYIGHSVKTLVLAY), 338-362 (SSATSNKVIRQILEYCPNMEHLDLT), 363-389 (QTDISDSAFNGWCFGACQTLRHIDLSG), 390-417 (CEKITDSALEKLSVALGMPLAHKKRLLK), 551-576 (IRDICPGSAKLDQQVARVLQFLSLSG), 577-604 (CHQITDHGLRVLTIGGGLPNLEHLNLSG), 605-630 (CLNVTGSGLQDLVSACPSLNDEHFYY), and 631-649 (CDNISGPHAATASGCQNLQ). [2Fe-2S] cluster-binding residues include C631, C645, C655, and C656.

As to quaternary structure, part of a SCF (SKP1-cullin-F-box) protein ligase complex. [2Fe-2S] cluster is required as a cofactor. Ubiquitinated upon iron and oxygen depletion, leading to its degradation by the proteasome. Ubiquitination is regulated by the hemerythrin-like region that acts as an oxygen and iron sensor.

The protein localises to the cytoplasm. It is found in the perinuclear region. It localises to the nucleus. The protein operates within protein modification; protein ubiquitination. In terms of biological role, component of some SCF (SKP1-cullin-F-box) protein ligase complex that plays a central role in iron homeostasis by promoting the ubiquitination and subsequent degradation of ireb2/irp2. Upon high iron and oxygen level, it specifically recognizes and binds ireb2/irp2, promoting its ubiquitination and degradation by the proteasome. The sequence is that of F-box/LRR-repeat protein 5 (fbxl5) from Xenopus tropicalis (Western clawed frog).